A 588-amino-acid polypeptide reads, in one-letter code: MTDKWVPGQGQPMYGSQQPHNLMPPPSGLYQQNSNQSNTSLDQQQQFNQQQYNSQQQYQQQQHSQYQQQQQQHQQQQQQQQQQQQQQQQQQQQQQQQHQQHQQQQQQPQQQSVAQQQPSDYVNFTPRPDLLSKTARDRAHNTTQVISTYYKGIVQHAIERHQRRSAAEASVEQATSEERRNRVLTNYGKKETAYLRMRRTRMALEDFVTVKVIGKGAFGEVRLVQKRDNGKIYAMKTMLKKEMDMKEQWAHVKAERDVLADSDSPWIVSLYFSFQDDLYLYLIMEFLPGGDLMTMLIKYDVFSEDITRFYIAECVLAIEAIHKLGFIHRDIKPDNILIDKTGHIKLSDFGLSTGFHKTHSSAYWKKLKDGTSSNPATQMGPPQNTNRQSTYDSIHLTMRQQISTWRKNRRLMAYSTVGTPDYIAPEIFVHQGYGQECDWWSLGAIMFECLVGWPPFCSEQPRETYHKIINWRETLQFPDDVHLSPESEDLIRRLLTSSENRLGRIGGANEIKSHPFFRGVDWSSIREFNAPFVPKLSSITDTSYFPTDELGDVSEYPQQSSRSDRSSDLPFIGYTFSRFDNMTRRNAI.

Disordered stretches follow at residues 1 to 76 (MTDK…HQQQ) and 100 to 139 (QHQQ…RDRA). Polar residues predominate over residues 29 to 42 (LYQQNSNQSNTSLD). Composition is skewed to low complexity over residues 43-76 (QQQQ…HQQQ) and 100-117 (QHQQ…AQQQ). The 311-residue stretch at 207 to 517 (FVTVKVIGKG…ANEIKSHPFF (311 aa)) folds into the Protein kinase domain. ATP contacts are provided by residues 213–221 (IGKGAFGEV) and K236. Catalysis depends on D330, which acts as the Proton acceptor. Positions 370-389 (GTSSNPATQMGPPQNTNRQS) are disordered. Residues 518-586 (RGVDWSSIRE…SRFDNMTRRN (69 aa)) enclose the AGC-kinase C-terminal domain.

The protein belongs to the protein kinase superfamily. STE Ser/Thr protein kinase family. COT1 subfamily.

The catalysed reaction is L-seryl-[protein] + ATP = O-phospho-L-seryl-[protein] + ADP + H(+). It carries out the reaction L-threonyl-[protein] + ATP = O-phospho-L-threonyl-[protein] + ADP + H(+). Functionally, protein kinase that seems to play a role in the regulation of cell morphogenesis and proliferation. The chain is Serine/threonine-protein kinase CBK1 (CBK1) from Yarrowia lipolytica (strain CLIB 122 / E 150) (Yeast).